A 151-amino-acid chain; its full sequence is MLNSLLPADWLYLERIVRFGETDSAGVIHFYQLLRWCHESWEESLERYGLKAADVFPNILNKEKQPLVALPIIHCEADFWKPLQTGDHISIELLPKKISAGSFQVTFKFKRGDNYVAQALIQHQAINSQTRSCCELSTKINSWLAESLCID.

The active site involves D23.

Belongs to the 4-hydroxybenzoyl-CoA thioesterase family. DHNA-CoA hydrolase subfamily.

The enzyme catalyses 1,4-dihydroxy-2-naphthoyl-CoA + H2O = 1,4-dihydroxy-2-naphthoate + CoA + H(+). It participates in cofactor biosynthesis; phylloquinone biosynthesis. It functions in the pathway quinol/quinone metabolism; 1,4-dihydroxy-2-naphthoate biosynthesis; 1,4-dihydroxy-2-naphthoate from chorismate: step 7/7. Catalyzes the hydrolysis of 1,4-dihydroxy-2-naphthoyl-CoA (DHNA-CoA) to 1,4-dihydroxy-2-naphthoate (DHNA), a reaction involved in phylloquinone (vitamin K1) biosynthesis. The sequence is that of 1,4-dihydroxy-2-naphthoyl-CoA hydrolase from Prochlorococcus marinus (strain MIT 9211).